The primary structure comprises 428 residues: Stromal membrane-associated protein 2 (428 aa).

An Arf-GAP domain is found at 13-139 (QAVLANLLLE…INVLRKEKDD (127 aa)). The C4-type zinc finger occupies 28 to 51 (CADCQSKGPRWASWNIGVFICIRC). Phosphoserine is present on residues S127, S219, S224, S230, and S239. Positions 163–231 (MPQKKEDAQL…SVSRKAVGSM (69 aa)) are interaction with clathrin heavy chains. The segment at 218-262 (PSPSSVSRKAVGSMPTAGSAGSVPENLNLFPEPGSKSEETGKKQL) is disordered. Basic and acidic residues predominate over residues 252 to 262 (SKSEETGKKQL). Residues 339–428 (MGGMQASMMG…NQTLSPQMWK (90 aa)) are interaction with PICALM.

In terms of assembly, interacts with ARF1. Interacts with PICALM and clathrin heavy chains.

It localises to the cytoplasm. GTPase activating protein that acts on ARF1. Can also activate ARF6 (in vitro). May play a role in clathrin-dependent retrograde transport from early endosomes to the trans-Golgi network. In Mus musculus (Mouse), this protein is Stromal membrane-associated protein 2 (Smap2).